The following is a 90-amino-acid chain: Acylphosphatase (90 aa).

An Acylphosphatase-like domain is found at Cys-4 to Tyr-90. Catalysis depends on residues Arg-19 and Asn-37.

The protein belongs to the acylphosphatase family.

The enzyme catalyses an acyl phosphate + H2O = a carboxylate + phosphate + H(+). The polypeptide is Acylphosphatase (acyP) (Methanothrix thermoacetophila (strain DSM 6194 / JCM 14653 / NBRC 101360 / PT) (Methanosaeta thermophila)).